The chain runs to 156 residues: Small ribosomal subunit protein uS7 (156 aa).

Belongs to the universal ribosomal protein uS7 family. As to quaternary structure, part of the 30S ribosomal subunit. Contacts proteins S9 and S11.

One of the primary rRNA binding proteins, it binds directly to 16S rRNA where it nucleates assembly of the head domain of the 30S subunit. Is located at the subunit interface close to the decoding center, probably blocks exit of the E-site tRNA. The sequence is that of Small ribosomal subunit protein uS7 from Photobacterium profundum (strain SS9).